The following is a 117-amino-acid chain: Immunoglobulin kappa variable 1-16 (117 aa).

A signal peptide spans 1–22 (MDMRVLAQLLGLLLLCFPGARC). The interval 23 to 45 (DIQMTQSPSSLSASVGDRVTITC) is framework-1. Residues 24-117 (IQMTQSPSSL…YYCQQYNSYP (94 aa)) form the Ig-like domain. C45 and C110 form a disulfide bridge. Positions 46-56 (RASQGISNYLA) are complementarity-determining-1. The segment at 57 to 71 (WFQQKPGKAPKSLIY) is framework-2. Residues 72 to 78 (AASSLQS) are complementarity-determining-2. The tract at residues 79–110 (GVPSKFSGSGSGTDFTLTISSLQPEDFATYYC) is framework-3. The tract at residues 111-117 (QQYNSYP) is complementarity-determining-3.

In terms of assembly, immunoglobulins are composed of two identical heavy chains and two identical light chains; disulfide-linked.

Its subcellular location is the secreted. The protein localises to the cell membrane. Functionally, v region of the variable domain of immunoglobulin light chains that participates in the antigen recognition. Immunoglobulins, also known as antibodies, are membrane-bound or secreted glycoproteins produced by B lymphocytes. In the recognition phase of humoral immunity, the membrane-bound immunoglobulins serve as receptors which, upon binding of a specific antigen, trigger the clonal expansion and differentiation of B lymphocytes into immunoglobulins-secreting plasma cells. Secreted immunoglobulins mediate the effector phase of humoral immunity, which results in the elimination of bound antigens. The antigen binding site is formed by the variable domain of one heavy chain, together with that of its associated light chain. Thus, each immunoglobulin has two antigen binding sites with remarkable affinity for a particular antigen. The variable domains are assembled by a process called V-(D)-J rearrangement and can then be subjected to somatic hypermutations which, after exposure to antigen and selection, allow affinity maturation for a particular antigen. In Homo sapiens (Human), this protein is Immunoglobulin kappa variable 1-16.